The primary structure comprises 228 residues: MKIKEMVTSEMPRERLLSHGAKSLSNTELLAILINTGRKGFSSIDISNELLKSASNLNELKKSSINDLIKVKGIGLQKAITLKAAFELGERMGRRAENNRIKITQPSDVADYMIPTMKDLTQEHFVILLLNSKNVVIKETCVFKGTLNSSIVHPREIFSIAVRENANAIIAVHNHPSGDVTPSQEDIITTMRLKECGLILGIDLLDHIIIGDNRFTSLVEAGYFDEND.

Residues 102-224 (KITQPSDVAD…FTSLVEAGYF (123 aa)) enclose the MPN domain. Residues His-173, His-175, and Asp-186 each contribute to the Zn(2+) site. A JAMM motif motif is present at residues 173-186 (HNHPSGDVTPSQED).

This sequence belongs to the UPF0758 family.

This is UPF0758 protein MW1604 from Staphylococcus aureus (strain MW2).